The chain runs to 721 residues: Polyribonucleotide nucleotidyltransferase (721 aa).

Mg(2+)-binding residues include D495 and D501. Residues 562 to 621 form the KH domain; sequence PRITTIKIRPERIKDIIGPGGKTIKDITARTGTSINIEDDGSVSIASPNQDKVEEAIKMI. An S1 motif domain is found at 631–699; the sequence is GRIYLGTVRK…RSGKIRLSRK (69 aa). Positions 699–721 are disordered; sequence KEALADSAKKSEGTEPPKGEPAK.

The protein belongs to the polyribonucleotide nucleotidyltransferase family. Mg(2+) serves as cofactor.

It localises to the cytoplasm. The enzyme catalyses RNA(n+1) + phosphate = RNA(n) + a ribonucleoside 5'-diphosphate. Involved in mRNA degradation. Catalyzes the phosphorolysis of single-stranded polyribonucleotides processively in the 3'- to 5'-direction. In Anaeromyxobacter dehalogenans (strain 2CP-1 / ATCC BAA-258), this protein is Polyribonucleotide nucleotidyltransferase.